The sequence spans 300 residues: NAD kinase (300 aa).

The active-site Proton acceptor is the aspartate 75. Residues 75–76, 149–150, arginine 177, aspartate 179, 190–195, alanine 214, and glutamine 248 each bind NAD(+); these read DG, ND, and TAYALS.

This sequence belongs to the NAD kinase family. A divalent metal cation is required as a cofactor.

The protein localises to the cytoplasm. It catalyses the reaction NAD(+) + ATP = ADP + NADP(+) + H(+). Involved in the regulation of the intracellular balance of NAD and NADP, and is a key enzyme in the biosynthesis of NADP. Catalyzes specifically the phosphorylation on 2'-hydroxyl of the adenosine moiety of NAD to yield NADP. This chain is NAD kinase, found in Burkholderia multivorans (strain ATCC 17616 / 249).